The chain runs to 141 residues: Large ribosomal subunit protein uL11 (141 aa).

This sequence belongs to the universal ribosomal protein uL11 family. In terms of assembly, part of the ribosomal stalk of the 50S ribosomal subunit. Interacts with L10 and the large rRNA to form the base of the stalk. L10 forms an elongated spine to which L12 dimers bind in a sequential fashion forming a multimeric L10(L12)X complex. Post-translationally, one or more lysine residues are methylated.

Its function is as follows. Forms part of the ribosomal stalk which helps the ribosome interact with GTP-bound translation factors. The polypeptide is Large ribosomal subunit protein uL11 (Syntrophus aciditrophicus (strain SB)).